The sequence spans 118 residues: MAHTNTQLSQWLESKVGQTLDIRKGELTHDEEISDLDQIVLHLQKVAIRSTNHPDDYVAKEELVLEGEGTTFTEDGNVPLPQNAYEIPLLGELHIHQENEGLKVVTDRAVYTIDIQHS.

This is an uncharacterized protein from Bacillus subtilis (strain 168).